Here is a 558-residue protein sequence, read N- to C-terminus: Dihydroxy-acid dehydratase (558 aa).

D78 is a binding site for Mg(2+). [2Fe-2S] cluster is bound at residue C119. The Mg(2+) site is built by D120 and K121. K121 carries the N6-carboxylysine modification. C191 is a binding site for [2Fe-2S] cluster. Mg(2+) is bound at residue E443. The active-site Proton acceptor is the S469.

Belongs to the IlvD/Edd family. In terms of assembly, homodimer. It depends on [2Fe-2S] cluster as a cofactor. Mg(2+) serves as cofactor.

It carries out the reaction (2R)-2,3-dihydroxy-3-methylbutanoate = 3-methyl-2-oxobutanoate + H2O. The enzyme catalyses (2R,3R)-2,3-dihydroxy-3-methylpentanoate = (S)-3-methyl-2-oxopentanoate + H2O. The protein operates within amino-acid biosynthesis; L-isoleucine biosynthesis; L-isoleucine from 2-oxobutanoate: step 3/4. Its pathway is amino-acid biosynthesis; L-valine biosynthesis; L-valine from pyruvate: step 3/4. Its function is as follows. Functions in the biosynthesis of branched-chain amino acids. Catalyzes the dehydration of (2R,3R)-2,3-dihydroxy-3-methylpentanoate (2,3-dihydroxy-3-methylvalerate) into 2-oxo-3-methylpentanoate (2-oxo-3-methylvalerate) and of (2R)-2,3-dihydroxy-3-methylbutanoate (2,3-dihydroxyisovalerate) into 2-oxo-3-methylbutanoate (2-oxoisovalerate), the penultimate precursor to L-isoleucine and L-valine, respectively. In Solidesulfovibrio magneticus (strain ATCC 700980 / DSM 13731 / RS-1) (Desulfovibrio magneticus), this protein is Dihydroxy-acid dehydratase.